Consider the following 395-residue polypeptide: Flap endonuclease 1 (395 aa).

Residues 1–108 are N-domain; it reads MGILGLSKLL…DELETRRQKA (108 aa). Asp34 is a Mg(2+) binding site. Arg74 provides a ligand contact to DNA. 5 residues coordinate Mg(2+): Asp90, Glu162, Glu164, Asp183, and Asp185. The I-domain stretch occupies residues 126-257; sequence MMEKMSKRTV…QRAWEGIQRY (132 aa). Glu162 contacts DNA. DNA-binding residues include Gly235 and Asp237. Asp237 lines the Mg(2+) pocket. The interval 340-348 is interaction with PCNA; the sequence is TQGRLDNFF.

This sequence belongs to the XPG/RAD2 endonuclease family. FEN1 subfamily. In terms of assembly, interacts with PCNA. Three molecules of FEN1 bind to one PCNA trimer with each molecule binding to one PCNA monomer. PCNA stimulates the nuclease activity without altering cleavage specificity. Mg(2+) is required as a cofactor. Post-translationally, phosphorylated. Phosphorylation upon DNA damage induces relocalization to the nuclear plasma.

Its subcellular location is the nucleus. The protein resides in the nucleolus. The protein localises to the nucleoplasm. It is found in the mitochondrion. In terms of biological role, structure-specific nuclease with 5'-flap endonuclease and 5'-3' exonuclease activities involved in DNA replication and repair. During DNA replication, cleaves the 5'-overhanging flap structure that is generated by displacement synthesis when DNA polymerase encounters the 5'-end of a downstream Okazaki fragment. It enters the flap from the 5'-end and then tracks to cleave the flap base, leaving a nick for ligation. Also involved in the long patch base excision repair (LP-BER) pathway, by cleaving within the apurinic/apyrimidinic (AP) site-terminated flap. Acts as a genome stabilization factor that prevents flaps from equilibrating into structures that lead to duplications and deletions. Also possesses 5'-3' exonuclease activity on nicked or gapped double-stranded DNA, and exhibits RNase H activity. Also involved in replication and repair of rDNA and in repairing mitochondrial DNA. This Leishmania braziliensis protein is Flap endonuclease 1.